Here is a 413-residue protein sequence, read N- to C-terminus: Tyrosine--tRNA ligase (413 aa).

Positions Pro59–His68 match the 'HIGH' region motif. A 'KMSKS' region motif is present at residues Lys243 to Ser247. Position 246 (Lys246) interacts with ATP. The 61-residue stretch at Leu351–Leu411 folds into the S4 RNA-binding domain.

Belongs to the class-I aminoacyl-tRNA synthetase family. TyrS type 2 subfamily. Homodimer.

The protein resides in the cytoplasm. It catalyses the reaction tRNA(Tyr) + L-tyrosine + ATP = L-tyrosyl-tRNA(Tyr) + AMP + diphosphate + H(+). Catalyzes the attachment of tyrosine to tRNA(Tyr) in a two-step reaction: tyrosine is first activated by ATP to form Tyr-AMP and then transferred to the acceptor end of tRNA(Tyr). This chain is Tyrosine--tRNA ligase, found in Burkholderia lata (strain ATCC 17760 / DSM 23089 / LMG 22485 / NCIMB 9086 / R18194 / 383).